Consider the following 473-residue polypeptide: Sarcalumenin (473 aa).

An N-terminal signal peptide occupies residues 1–20; that stretch reads MRALVLLGCLLASLLFSGQA. Residues 90–331 form the Dynamin-type G domain; sequence ITSKPMVLFL…IENRLENKIA (242 aa). Positions 100-107 are G1 motif; the sequence is GPWSVGKS. Residues 128–129 form a G2 motif region; that stretch reads EP. The segment at 190–193 is G3 motif; that stretch reads DTPG. Positions 255-258 are G4 motif; sequence NKAD. Position 278 (Pro-278) is a region of interest, G5 motif. Residues Asn-281 and Asn-389 are each glycosylated (N-linked (GlcNAc...) asparagine).

Belongs to the TRAFAC class dynamin-like GTPase superfamily. Dynamin/Fzo/YdjA family. N-glycosylated.

Its subcellular location is the sarcoplasmic reticulum lumen. It localises to the sarcoplasmic reticulum membrane. This Homo sapiens (Human) protein is Sarcalumenin (SRL).